A 204-amino-acid polypeptide reads, in one-letter code: Guanylate kinase (204 aa).

Residues 5–184 form the Guanylate kinase-like domain; the sequence is GLLLVLSGPS…AVDHIKSIVE (180 aa). 12–19 lines the ATP pocket; that stretch reads GPSGVGKG.

It belongs to the guanylate kinase family.

It localises to the cytoplasm. The catalysed reaction is GMP + ATP = GDP + ADP. Functionally, essential for recycling GMP and indirectly, cGMP. The sequence is that of Guanylate kinase from Lactobacillus johnsonii (strain CNCM I-12250 / La1 / NCC 533).